The sequence spans 415 residues: MADPFAPRTMKRRNVKGLALTPAAPKPPPTAENAPIHRDSDQHAQLEIGIEFNLDLRPEDLEVIKDLGSGNGGTVSKVRHIPTNTVMARKVIHVEAKREMRKRIVRELQIMHSCNSEYIVTFYGAFLNENNDVIMCMEYADVGSLDRVSRVFGPIRVDVLGKIAEATLGGLTYLYAKHHIMHRDIKPSNILVNSRGSIKLCDFGVSGELINSIADTFVGTSTYMAPERIQGEKYTVKSDVWSFGLSIMELAIGKFPFAASEQLSDAESAPAGILDLLQQIVHEPAPKLPKSDAFPQILEDMIQKCLYKNPDDRPTPEELFERDPFVQAAKRTPVDLREWAFGLMERDNRKSHLAPQLSPATADLLRSSDSPTATYHGDDRPLETPTSAYRVDPRRGPAEGSAGLADQVDRLYIRD.

The disordered stretch occupies residues 1–37; it reads MADPFAPRTMKRRNVKGLALTPAAPKPPPTAENAPIH. In terms of domain architecture, Protein kinase spans 61–326; sequence LEVIKDLGSG…EELFERDPFV (266 aa). Residues 67-75 and Lys90 each bind ATP; that span reads LGSGNGGTV. Residues 363-409 form a disordered region; sequence DLLRSSDSPTATYHGDDRPLETPTSAYRVDPRRGPAEGSAGLADQVD.

It belongs to the protein kinase superfamily. STE Ser/Thr protein kinase family. MAP kinase kinase subfamily. As to quaternary structure, homodimer. Interacts with the adapter protein MST50. Interacts with TRX2.

It catalyses the reaction L-seryl-[protein] + ATP = O-phospho-L-seryl-[protein] + ADP + H(+). The enzyme catalyses L-threonyl-[protein] + ATP = O-phospho-L-threonyl-[protein] + ADP + H(+). Its function is as follows. Mitogen-activated protein kinase kinase; part of the MST11-MST7-PMK1 MAP kinase (MAPK) cascade that is essential for appressorium formation, penetration and invasive growth. The MST11-MST7-PMK1 MAP kinase cascade transduces signals from the cell surface sensors MDB2 and SHO1 that recognize various surface signals such as surface hydrophobicity, cutin monomers, and rice leaf waxes. MST7 acts as the upstream MAPKK that directly phosphorylates MAP kinase PMK1. The sequence is that of Mitogen-activated protein kinase kinae MST7 from Pyricularia oryzae (strain 70-15 / ATCC MYA-4617 / FGSC 8958) (Rice blast fungus).